Consider the following 201-residue polypeptide: CASP-like protein 2A1 (201 aa).

The interval 1–27 (MEKRDKGSSPMATMMGSRDENEDVENT) is disordered. Residues 1–30 (MEKRDKGSSPMATMMGSRDENEDVENTTRT) lie on the Cytoplasmic side of the membrane. Residues 31 to 51 (AETMLRLVPMALCVSALVVML) traverse the membrane as a helical segment. Over 52–72 (KNTQTNDYGSLSYSDLGAFRY) the chain is Extracellular. A helical membrane pass occupies residues 73–93 (LVHVNGICAGYSLLSAVIVAM). Residues 94-101 (PRASTMPR) lie on the Cytoplasmic side of the membrane. A helical transmembrane segment spans residues 102-122 (AWAFFLLDQVLTYVILAAGTV). Over 123–152 (STEVLYLASKGDTTITWSEACVSFGGFCHK) the chain is Extracellular. A helical transmembrane segment spans residues 153–173 (ALISIVITFVVVICYAALSLL). Residues 174 to 201 (SSYKLFSKYDSPVLTYPGKGIEIATFHG) lie on the Cytoplasmic side of the membrane.

This sequence belongs to the Casparian strip membrane proteins (CASP) family. Homodimer and heterodimers.

The protein resides in the cell membrane. The sequence is that of CASP-like protein 2A1 from Populus trichocarpa (Western balsam poplar).